The following is a 642-amino-acid chain: Putative ATP-binding protein YdiF (642 aa).

ABC transporter domains lie at 4–259 and 327–541; these read LQVN…EKDL and LRVQ…ELEK. Residues 36–43 and 360–367 contribute to the ATP site; these read GRNGAGKS and GPNGIGKS. Basic and acidic residues-rich tracts occupy residues 541-550 and 557-567; these read KMNQQEETDK and SDSKRSYEEEK. The segment at 541-567 is disordered; that stretch reads KMNQQEETDKTPATVKSDSKRSYEEEK.

The protein belongs to the ABC transporter superfamily. ABCF family. YdiF subfamily.

The sequence is that of Putative ATP-binding protein YdiF (ydiF) from Bacillus subtilis (strain 168).